The following is a 120-amino-acid chain: Cell cycle protein GpsB (120 aa).

The stretch at 32 to 68 (LDDIIKDYETYAALVKELREENRRLKEELAAKPVEKA) forms a coiled coil. The segment at 63–88 (KPVEKAPVQPTQPVQSTQATQSTVES) is disordered. Over residues 68–86 (APVQPTQPVQSTQATQSTV) the composition is skewed to low complexity.

Belongs to the GpsB family. In terms of assembly, forms polymers through the coiled coil domains. Interacts with PBP1, MreC and EzrA.

It localises to the cytoplasm. Functionally, divisome component that associates with the complex late in its assembly, after the Z-ring is formed, and is dependent on DivIC and PBP2B for its recruitment to the divisome. Together with EzrA, is a key component of the system that regulates PBP1 localization during cell cycle progression. Its main role could be the removal of PBP1 from the cell pole after pole maturation is completed. Also contributes to the recruitment of PBP1 to the division complex. Not essential for septum formation. In Streptococcus sanguinis (strain SK36), this protein is Cell cycle protein GpsB.